Consider the following 720-residue polypeptide: Collectin-12 (720 aa).

The Cytoplasmic segment spans residues Met-1–Arg-37. Residues Val-38–Gly-58 form a helical; Signal-anchor for type II membrane protein membrane-spanning segment. Over Tyr-59–Leu-720 the chain is Extracellular. Coiled coils occupy residues Glu-95–Asp-120, Ile-216–Asn-267, and Leu-377–Glu-408. A disordered region spans residues Phe-433 to Ala-576. Collagen-like domains lie at Gly-444–Lys-503 and Gly-510–Pro-569. Basic and acidic residues predominate over residues Pro-460 to Lys-479. Over residues Pro-488–Lys-503 the composition is skewed to low complexity. The span at Gly-504 to Gly-513 shows a compositional bias: gly residues. Residues Pro-527–Val-560 show a composition bias toward low complexity. Positions Pro-562 to Ala-576 are enriched in pro residues. Cystine bridges form between Cys-604/Cys-615, Cys-634/Cys-709, and Cys-687/Cys-701. In terms of domain architecture, C-type lectin spans Phe-611 to Glu-710. Residues Ile-643, Asn-645, and Glu-649 each coordinate Ca(2+). Lys-670, Gln-673, and Asp-675 together coordinate a carbohydrate. Residues Gln-673, Asp-675, Asn-676, Glu-685, Asp-686, Asn-697, Asp-698, and Glu-710 each contribute to the Ca(2+) site. Residue Glu-685 participates in a carbohydrate binding. Asn-697 and Asp-698 together coordinate a carbohydrate.

The protein resides in the membrane. Its function is as follows. Scavenger receptor that displays several functions associated with host defense. Binds to carbohydrates. The polypeptide is Collectin-12 (colec12) (Danio rerio (Zebrafish)).